The primary structure comprises 479 residues: Sulfate adenylyltransferase subunit 1 (479 aa).

The 215-residue stretch at 25–239 (KSLLRFLTCG…EVLETVDIQR (215 aa)) folds into the tr-type G domain. Residues 34–41 (GSVDDGKS) are G1. 34–41 (GSVDDGKS) serves as a coordination point for GTP. Residues 92–96 (GITID) are G2. Residues 113–116 (DTPG) form a G3 region. GTP contacts are provided by residues 113-117 (DTPGH) and 168-171 (NKMD). The G4 stretch occupies residues 168–171 (NKMD). A G5 region spans residues 206 to 208 (SAL).

The protein belongs to the TRAFAC class translation factor GTPase superfamily. Classic translation factor GTPase family. CysN/NodQ subfamily. Heterodimer composed of CysD, the smaller subunit, and CysN.

The enzyme catalyses sulfate + ATP + H(+) = adenosine 5'-phosphosulfate + diphosphate. The protein operates within sulfur metabolism; hydrogen sulfide biosynthesis; sulfite from sulfate: step 1/3. With CysD forms the ATP sulfurylase (ATPS) that catalyzes the adenylation of sulfate producing adenosine 5'-phosphosulfate (APS) and diphosphate, the first enzymatic step in sulfur assimilation pathway. APS synthesis involves the formation of a high-energy phosphoric-sulfuric acid anhydride bond driven by GTP hydrolysis by CysN coupled to ATP hydrolysis by CysD. The sequence is that of Sulfate adenylyltransferase subunit 1 from Salmonella typhimurium (strain LT2 / SGSC1412 / ATCC 700720).